The following is a 325-amino-acid chain: MSWLTPDLIDILLSILKAVVILLVVVTCGAFMSFGERRLLGLFQNRYGPNRVGWGGSLQLVADMIKMFFKEDWIPRFSDRVIFTLAPVIAFTSLLLAFAIVPVSPTWVVADLNIGILFFLMMAGLAVYAVLFAGWSSNNKYSLLGAMRASAQTLSYEVFLGLSLMGVVAQAGSFNMTDIVNNQAHLWNVIPQFFGFVTFAIAGVAVCHRHPFDQPEAEQELADGYHIEYSGMKFGLFFVGEYIGIVTVSALIVTLFFGGWNGPWLPPFIWFALKTAFFMMMFILIRASLPRPRYDQVMSFGWKVCLPLTLVNLLVTAAVILWQAQ.

The next 8 helical transmembrane spans lie at 11–31, 81–101, 114–134, 154–174, 186–206, 237–257, 265–285, and 304–324; these read ILLS…CGAF, VIFT…FAIV, IGIL…LFAG, LSYE…AGSF, LWNV…GVAV, FFVG…TLFF, LPPF…FILI, and VCLP…LWQA.

Belongs to the complex I subunit 1 family. In terms of assembly, NDH-1 is composed of 13 different subunits. Subunits NuoA, H, J, K, L, M, N constitute the membrane sector of the complex.

The protein resides in the cell inner membrane. It catalyses the reaction a quinone + NADH + 5 H(+)(in) = a quinol + NAD(+) + 4 H(+)(out). NDH-1 shuttles electrons from NADH, via FMN and iron-sulfur (Fe-S) centers, to quinones in the respiratory chain. The immediate electron acceptor for the enzyme in this species is believed to be ubiquinone. Couples the redox reaction to proton translocation (for every two electrons transferred, four hydrogen ions are translocated across the cytoplasmic membrane), and thus conserves the redox energy in a proton gradient. This subunit may bind ubiquinone. The sequence is that of NADH-quinone oxidoreductase subunit H from Klebsiella pneumoniae (strain 342).